Reading from the N-terminus, the 406-residue chain is SEC14-like protein 4 (406 aa).

Residues Pro-76–Asp-249 enclose the CRAL-TRIO domain. Residues Pro-252–Val-383 form the GOLD domain.

Its function is as follows. Probable hydrophobic ligand-binding protein; may play a role in the transport of hydrophobic ligands like tocopherol, squalene and phospholipids. The protein is SEC14-like protein 4 (SEC14L4) of Homo sapiens (Human).